The primary structure comprises 613 residues: MDLTASLEDDQREKLRQYTEFTHQQDYEVAIGTLASLNWNLEQAIEAHLMQEDKNDDEDPEILETIPAAASGRNAGASSSSRFEPEVINIEDDEMPATRGRRRGRAVTPDETTTVDNQVKRLRIDDGSSSSSNGAATHHRGAAIPRQKRGQATEPTPSSSGSSSASFSSRRGTRANPVPPPNQEPAHPESARQNGGILASRHNNHNNQQNNHHHHHQRIPINPRRVDVFNVDSDEDDDSMAIAYEDDDDGVHEVHHSEVVARGSGPPNGRIPMIPDGFSSVSDALRNFVAIFSDRFCSTPQTQAFMPPFYTEPLPAAVKEAFDHPNSEHRRPLLFYINHDRSIAANIFASQVLCSETVSTLIRHQYVLFPWDITSDSNLMLFLEYLQAANMGDVRTIIQRLAMSKIESFPLMAIVVKERNSYRLVDYCRGTDTSDQVMEKLLSGVSEYSDIRMNEQSERREREEREAIRNQQEAEYKASLAADKARMEAKQQEIEEQRLEEERKLREEEEECVRRQTVASTVPEEPPASAPLAEIINVKFRLPEGGQDMRRFRRLESIQTLINYLSSKGYSPDKFKYFNSDFPKKEITRHFDLSHNFADTKWPAREQIFVEEI.

Disordered stretches follow at residues 67–223 (PAAA…PINP) and 453–472 (MNEQ…RNQQ). Positions 68–82 (AAASGRNAGASSSSR) are enriched in low complexity. The span at 137 to 149 (THHRGAAIPRQKR) shows a compositional bias: basic residues. Residues 158–169 (SSSGSSSASFSS) show a composition bias toward low complexity. A coiled-coil region spans residues 452–517 (RMNEQSERRE…EEEECVRRQT (66 aa)). The 80-residue stretch at 531-610 (PLAEIINVKF…KWPAREQIFV (80 aa)) folds into the UBX domain. An Interaction with cdc-48 motif is present at residues 582 to 584 (FPK).

Forms a complex composed of ubxn-3, cdc-48.1, ufd-1 and npl-4.1. Forms a complex composed of ubxn-3, cdc-48.1 and/or cdc-48.2 and substrate cdt-1. Interacts (via FPK motif) with cdc-48.1 (via N-terminus) and cdc-48.2 (via N-terminus). Interacts (via N-terminus) with cdt-1 and ubiquitinated protein substrates; the interaction is cdc-48-independent. May interact with npl-4.1. Expressed in the germline (at protein level). Expressed in spermatocytes but not in mature sperm (at protein level). Expressed in the spermatheca and nerve cells.

It is found in the nucleus. The protein localises to the cytoplasm. The protein resides in the perinuclear region. It localises to the chromosome. Functionally, ubiquitin-binding protein which acts as an adapter for ATPase cdc-48.1 and/or cdc-48.2, conferring substrate specificity. Together with ubxn-1 and ubxn-2, plays a role in hermaphrodite spermatogenesis probably by promoting the degradation of sex determination terminal factor tra-1. During mitosis, ensures the degradation of DNA licensing factor cdt-1 and the disassembly of the DNA replication CMG helicase complex by promoting the dissociation from chromatin of several of its components including cdc-45 and sld-5. The sequence is that of UBX domain-containing protein 3 from Caenorhabditis elegans.